Consider the following 168-residue polypeptide: Peptide deformylase 2 (168 aa).

2 residues coordinate Fe cation: C91 and H133. Residue E134 is part of the active site. H137 serves as a coordination point for Fe cation.

The protein belongs to the polypeptide deformylase family. Requires Fe(2+) as cofactor.

The catalysed reaction is N-terminal N-formyl-L-methionyl-[peptide] + H2O = N-terminal L-methionyl-[peptide] + formate. Removes the formyl group from the N-terminal Met of newly synthesized proteins. Requires at least a dipeptide for an efficient rate of reaction. N-terminal L-methionine is a prerequisite for activity but the enzyme has broad specificity at other positions. This is Peptide deformylase 2 from Vibrio cholerae serotype O1 (strain ATCC 39315 / El Tor Inaba N16961).